Here is an 801-residue protein sequence, read N- to C-terminus: MLQNVTPHNKLPGEGNAGLLGLGPEAAAPGKRIRKPSLLYEGFESPTMASVPALQLTPANPPPPEVSNPKKPGRVTNQLQYLHKVVMKALWKHQFAWPFRQPVDAVKLGLPDYHKIIKQPMDMGTIKRRLENNYYWAASECMQDFNTMFTNCYIYNKPTDDIVLMAQTLEKIFLQKVASMPQEEQELVVTIPKNSHKKGAKLAALQGSVTSAHQVPAVSSVSHTALYTPPPEIPTTVLNIPHPSVISSPLLKSLHSAGPPLLAVTAAPPAQPLAKKKGVKRKADTTTPTPTAILAPGSPASPPGSLEPKAARLPPMRRESGRPIKPPRKDLPDSQQQHQSSKKGKLSEQLKHCNGILKELLSKKHAAYAWPFYKPVDASALGLHDYHDIIKHPMDLSTVKRKMENRDYRDAQEFAADVRLMFSNCYKYNPPDHDVVAMARKLQDVFEFRYAKMPDEPLEPGPLPVSTAMPPGLAKSSSESSSEESSSESSSEEEEEEDEEDEEEEESESSDSEEERAHRLAELQEQLRAVHEQLAALSQGPISKPKRKREKKEKKKKRKAEKHRGRAGADEDDKGPRAPRPPQPKKSKKASGSGGGSAALGPSGFGPSGGSGTKLPKKATKTAPPALPTGYDSEEEEESRPMSYDEKRQLSLDINKLPGEKLGRVVHIIQAREPSLRDSNPEEIEIDFETLKPSTLRELERYVLSCLRKKPRKPYTIKKPVGKTKEELALEKKRELEKRLQDVSGQLNSTKKPPKKANEKTESSSAQQVAVSRLSASSSSSDSSSSSSSSSSSDTSDSDSG.

The residue at position 1 (M1) is an N-acetylmethionine. At T6 the chain carries Phosphothreonine. The residue at position 37 (S37) is a Phosphoserine. The interval 53–73 (ALQLTPANPPPPEVSNPKKPG) is disordered. In terms of domain architecture, Bromo 1 spans 74–180 (RVTNQLQYLH…KIFLQKVASM (107 aa)). Positions 112, 155, 156, 157, 160, and 161 each coordinate a protein. Disordered stretches follow at residues 268-349 (PPAQ…LSEQ), 456-647 (EPLE…YDEK), and 737-801 (EKRL…SDSG). A compositionally biased stretch (low complexity) spans 285 to 298 (TTTPTPTAILAPGS). Residues S298, S301, and S305 each carry the phosphoserine modification. The span at 316–332 (MRRESGRPIKPPRKDLP) shows a compositional bias: basic and acidic residues. Positions 344 to 453 (GKLSEQLKHC…DVFEFRYAKM (110 aa)) constitute a Bromo 2 domain. Residues 481 to 514 (SSEESSSESSSEEEEEEDEEDEEEEESESSDSEE) are compositionally biased toward acidic residues. Basic residues predominate over residues 544–566 (KPKRKREKKEKKKKRKAEKHRGR). A Nuclear localization signal motif is present at residues 555–559 (KKKRK). A compositionally biased stretch (gly residues) spans 592–612 (GSGGGSAALGPSGFGPSGGSG). The 83-residue stretch at 632-714 (DSEEEEESRP…SCLRKKPRKP (83 aa)) folds into the NET domain. A Phosphoserine modification is found at S633. Positions 763–795 (SSSAQQVAVSRLSASSSSSDSSSSSSSSSSSDT) are enriched in low complexity.

The protein belongs to the BET family. Homodimer. Interacts with E2F1. Interacts with (acetylated) STAT3; promoting STAT3 recruitment to chromatin. Interacts with CTCF; promoting BRD2 recruitment to chromatin. As to quaternary structure, (Microbial infection) Interacts with herpes virus 8 protein LANA1.

The protein resides in the nucleus. It localises to the chromosome. Its activity is regulated as follows. Inhibited by JQ1, a thieno-triazolo-1,4-diazepine derivative, which specifically inhibits members of the BET family (BRD2, BRD3 and BRD4). The first bromo domain is inhibited by GSK778 (iBET-BD1), which specifically inhibits the first bromo domain of members of the BET family (BRD2, BRD3 and BRD4). The second bromo domain is inhibited by ABBV-744, which specifically inhibits the second bromo domain of members of the BET family (BRD2, BRD3 and BRD4). The second bromo domain is inhibited by GSK046 (iBET-BD2), which specifically inhibits the second bromo domain of members of the BET family (BRD2, BRD3 and BRD4). Functionally, chromatin reader protein that specifically recognizes and binds histone H4 acetylated at 'Lys-5' and 'Lys-12' (H4K5ac and H4K12ac, respectively), thereby controlling gene expression and remodeling chromatin structures. Recruits transcription factors and coactivators to target gene sites, and activates RNA polymerase II machinery for transcriptional elongation. Plays a key role in genome compartmentalization via its association with CTCF and cohesin: recruited to chromatin by CTCF and promotes formation of topologically associating domains (TADs) via its ability to bind acetylated histones, contributing to CTCF boundary formation and enhancer insulation. Also recognizes and binds acetylated non-histone proteins, such as STAT3. Involved in inflammatory response by regulating differentiation of naive CD4(+) T-cells into T-helper Th17: recognizes and binds STAT3 acetylated at 'Lys-87', promoting STAT3 recruitment to chromatin. In addition to acetylated lysines, also recognizes and binds lysine residues on histones that are both methylated and acetylated on the same side chain to form N6-acetyl-N6-methyllysine (Kacme), an epigenetic mark of active chromatin associated with increased transcriptional initiation. Specifically binds histone H4 acetyl-methylated at 'Lys-5' and 'Lys-12' (H4K5acme and H4K12acme, respectively). This is Bromodomain-containing protein 2 from Homo sapiens (Human).